We begin with the raw amino-acid sequence, 267 residues long: MKKWIYVVLVLSIAGIGGFSVHAASSAHEKHLNVSKMNVDDEFKDTDGTFILHDLQKDQTFVYNRKRANQRQTPQSTFKVVNALIGLQVKAVRDEYDVKRWDGVKREFESWNRDHTLGSAMRESAIWYYQALARDIGEERMKTWLHTLSYGNEDISGGIDQFWLQSSLTISPLEQETFLEKLAKEELPFDKPVMKIVKRMMIQEEGDHYTLYGKTGTRLTDMGLGWFVGFIKTEHGSYVFVTNVDDSGTKAKNITVDILKKYGLITS.

An N-terminal signal peptide occupies residues 1–23 (MKKWIYVVLVLSIAGIGGFSVHA). S76 serves as the catalytic Acyl-ester intermediate. K79 bears the N6-carboxylysine mark. A substrate-binding site is contributed by 214 to 216 (KTG).

Belongs to the class-D beta-lactamase family.

It catalyses the reaction a beta-lactam + H2O = a substituted beta-amino acid. This chain is Probable beta-lactamase YbxI (ybxI), found in Bacillus subtilis (strain 168).